Consider the following 319-residue polypeptide: Lipoyl synthase (319 aa).

Residues Cys-61, Cys-66, Cys-72, Cys-87, Cys-91, Cys-94, and Ser-300 each contribute to the [4Fe-4S] cluster site. A Radical SAM core domain is found at 73–289; the sequence is WDKKHATFMI…ESVAYSKGFL (217 aa).

It belongs to the radical SAM superfamily. Lipoyl synthase family. [4Fe-4S] cluster is required as a cofactor.

The protein localises to the cytoplasm. It carries out the reaction [[Fe-S] cluster scaffold protein carrying a second [4Fe-4S](2+) cluster] + N(6)-octanoyl-L-lysyl-[protein] + 2 oxidized [2Fe-2S]-[ferredoxin] + 2 S-adenosyl-L-methionine + 4 H(+) = [[Fe-S] cluster scaffold protein] + N(6)-[(R)-dihydrolipoyl]-L-lysyl-[protein] + 4 Fe(3+) + 2 hydrogen sulfide + 2 5'-deoxyadenosine + 2 L-methionine + 2 reduced [2Fe-2S]-[ferredoxin]. It participates in protein modification; protein lipoylation via endogenous pathway; protein N(6)-(lipoyl)lysine from octanoyl-[acyl-carrier-protein]: step 2/2. Its function is as follows. Catalyzes the radical-mediated insertion of two sulfur atoms into the C-6 and C-8 positions of the octanoyl moiety bound to the lipoyl domains of lipoate-dependent enzymes, thereby converting the octanoylated domains into lipoylated derivatives. This is Lipoyl synthase from Rhodopseudomonas palustris (strain BisB18).